The sequence spans 806 residues: Transitional endoplasmic reticulum ATPase (806 aa).

Position 3 is a phosphoserine (Ser3). Residues 247–253, Asn348, His384, and 521–526 contribute to the ATP site; these read PGTGKTL and GCGKTL. 2 disordered regions span residues 708–727 and 768–806; these read RRERERQTNPSAMEVEEDDP and FGSFRFPSSNQGGSGPSQGSSGGGGGNVFNEDNDDDLYG. Positions 768 to 778 are enriched in low complexity; sequence FGSFRFPSSNQ. A compositionally biased stretch (gly residues) spans 779 to 794; the sequence is GGSGPSQGSSGGGGGN.

This sequence belongs to the AAA ATPase family. As to quaternary structure, homohexamer.

It is found in the cytoplasm. It localises to the cytosol. Its subcellular location is the endoplasmic reticulum. The protein localises to the nucleus. The enzyme catalyses ATP + H2O = ADP + phosphate + H(+). Its function is as follows. Necessary for the fragmentation of Golgi stacks during mitosis and for their reassembly after mitosis. Involved in the formation of the nuclear envelope, and of the transitional endoplasmic reticulum (tER). The transfer of membranes from the endoplasmic reticulum to the Golgi apparatus occurs via 50-70 nm transition vesicles which derive from part-rough, part-smooth transitional elements of the endoplasmic reticulum (tER). Vesicle budding from the tER is an ATP-dependent process. Also involved in DNA damage response: recruited to double-strand breaks (DSBs) sites and promotes the recruitment of tp53bp1 at DNA damage sites. Together with sprtn metalloprotease, involved in the repair of covalent DNA-protein cross-links (DPCs) during DNA synthesis. Involved in interstrand cross-link repair in response to replication stress by mediating unloading of the ubiquitinated CMG helicase complex. Enhances cell cycle progression and inhibits apoptosis at low temperatures. Essential for the maturation of ubiquitin-containing autophagosomes and the clearance of ubiquitinated protein by autophagy. Acts as a negative regulator of type I interferon production by promoting ubiquitination of RIGI. May play a role in the ubiquitin-dependent sorting of membrane proteins to lysosomes where they undergo degradation. May more particularly play a role in caveolins sorting in cells. By controlling the steady-state expression of the IGF1R receptor, indirectly regulates the insulin-like growth factor receptor signaling pathway. The protein is Transitional endoplasmic reticulum ATPase of Danio rerio (Zebrafish).